The primary structure comprises 239 residues: Prolyl hydroxylase EGLN3 (239 aa).

The segment at 62-73 (AGPRAGVSKRHL) is beta(2)beta(3) 'finger-like' loop. Residues 88 to 104 (CEAISFLLSLIDRLVLY) form a required for interaction with ADRB2 region. One can recognise a Fe2OG dioxygenase domain in the interval 116–214 (ERSKAMVACY…RYAMTVWYFD (99 aa)). His-135, Asp-137, and His-196 together coordinate Fe cation. Arg-205 contributes to the 2-oxoglutarate binding site.

As to quaternary structure, interacts with BCL2 (via its BH4 domain); the interaction disrupts the BAX-BCL4 complex inhibiting the anti-apoptotic activity of BCL2. Interacts with WDR83; the interaction leads to almost complete elimination of HIF-mediated reporter activity. Interacts with ADRB2; the interaction hydroxylates ADRB2 facilitating its ubiquitination by the VHL-E3 ligase complex. Interacts with PAX2; the interaction targets PAX2 for destruction. Interacts with PKM; the interaction hydroxylates PKM in hypoxia. Interacts with LIMD1, WTIP and AJUBA. Fe(2+) serves as cofactor. Requires L-ascorbate as cofactor. In terms of processing, ubiquitinated by SIAH1 and/or SIAH2 in response to the unfolded protein response (UPR), leading to its degradation. As to expression, widely expressed at low levels. Expressed at higher levels in adult heart (cardiac myocytes, aortic endothelial cells and coronary artery smooth muscle), lung and placenta, and in fetal spleen, heart and skeletal muscle. Also expressed in pancreas. Localized to pancreatic acini and islet cells.

It localises to the nucleus. Its subcellular location is the cytoplasm. The enzyme catalyses L-prolyl-[protein] + 2-oxoglutarate + O2 = trans-4-hydroxy-L-prolyl-[protein] + succinate + CO2. The catalysed reaction is L-prolyl-[hypoxia-inducible factor alpha subunit] + 2-oxoglutarate + O2 = trans-4-hydroxy-L-prolyl-[hypoxia-inducible factor alpha subunit] + succinate + CO2. Its activity is regulated as follows. Activated in cardiovascular cells and Hela cells following exposure to hypoxia. Inhibited by polynitrogen compounds probably by chelation to Fe(2+) ions. Its function is as follows. Prolyl hydroxylase that mediates hydroxylation of proline residues in target proteins, such as PKM, TELO2, ATF4 and HIF1A. Target proteins are preferentially recognized via a LXXLAP motif. Cellular oxygen sensor that catalyzes, under normoxic conditions, the post-translational formation of 4-hydroxyproline in hypoxia-inducible factor (HIF) alpha proteins. Hydroxylates a specific proline found in each of the oxygen-dependent degradation (ODD) domains (N-terminal, NODD, and C-terminal, CODD) of HIF1A. Also hydroxylates HIF2A. Has a preference for the CODD site for both HIF1A and HIF2A. Hydroxylation on the NODD site by EGLN3 appears to require prior hydroxylation on the CODD site. Hydroxylated HIFs are then targeted for proteasomal degradation via the von Hippel-Lindau ubiquitination complex. Under hypoxic conditions, the hydroxylation reaction is attenuated allowing HIFs to escape degradation resulting in their translocation to the nucleus, heterodimerization with HIF1B, and increased expression of hypoxy-inducible genes. ELGN3 is the most important isozyme in limiting physiological activation of HIFs (particularly HIF2A) in hypoxia. Also hydroxylates PKM in hypoxia, limiting glycolysis. Under normoxia, hydroxylates and regulates the stability of ADRB2. Regulator of cardiomyocyte and neuronal apoptosis. In cardiomyocytes, inhibits the anti-apoptotic effect of BCL2 by disrupting the BAX-BCL2 complex. In neurons, has a NGF-induced proapoptotic effect, probably through regulating CASP3 activity. Also essential for hypoxic regulation of neutrophilic inflammation. Plays a crucial role in DNA damage response (DDR) by hydroxylating TELO2, promoting its interaction with ATR which is required for activation of the ATR/CHK1/p53 pathway. Also mediates hydroxylation of ATF4, leading to decreased protein stability of ATF4. In Homo sapiens (Human), this protein is Prolyl hydroxylase EGLN3.